A 1258-amino-acid polypeptide reads, in one-letter code: Plasma membrane calcium-transporting ATPase 3 (1258 aa).

Polar residues predominate over residues methionine 1–arginine 19. Residues methionine 1 to proline 22 form a disordered region. Residues methionine 1–threonine 97 are Cytoplasmic-facing. Serine 8 carries the post-translational modification Phosphoserine. Residues phenylalanine 98 to alanine 118 form a helical membrane-spanning segment. The Extracellular portion of the chain corresponds to isoleucine 119 to isoleucine 155. Residues glutamate 156–tryptophan 176 traverse the membrane as a helical segment. Residues serine 177–leucine 364 lie on the Cytoplasmic side of the membrane. 2 disordered regions span residues glutamate 298 to alanine 328 and lysine 335 to lysine 354. 2 stretches are compositionally biased toward basic and acidic residues: residues glutamate 299–glutamine 308 and methionine 342–lysine 354. A helical transmembrane segment spans residues threonine 365–isoleucine 384. At isoleucine 385–phenylalanine 417 the chain is on the extracellular side. The chain crosses the membrane as a helical span at residues phenylalanine 418–leucine 435. At alanine 436–isoleucine 849 the chain is on the cytoplasmic side. Aspartate 473 acts as the 4-aspartylphosphate intermediate in catalysis. Residues aspartate 794 and aspartate 798 each coordinate Mg(2+). The chain crosses the membrane as a helical span at residues serine 850–threonine 869. The Extracellular portion of the chain corresponds to glycine 870–leucine 879. Residues lysine 880 to alanine 900 traverse the membrane as a helical segment. Residues threonine 901–leucine 920 lie on the Cytoplasmic side of the membrane. The chain crosses the membrane as a helical span at residues isoleucine 921 to leucine 943. Topologically, residues leucine 944–leucine 961 are extracellular. The helical transmembrane segment at histidine 962–asparagine 983 threads the bilayer. Over glutamate 984–serine 1002 the chain is Cytoplasmic. Residues asparagine 1003 to glycine 1024 traverse the membrane as a helical segment. The Extracellular portion of the chain corresponds to glycine 1025–serine 1034. A helical membrane pass occupies residues threonine 1035–alanine 1056. Over threonine 1057 to leucine 1258 the chain is Cytoplasmic. Threonine 1079 carries the phosphothreonine modification. The calmodulin-binding subdomain A stretch occupies residues leucine 1097–glutamine 1114. The residue at position 1113 (threonine 1113) is a Phosphothreonine; by PKC. Positions methionine 1115 to serine 1124 are calmodulin-binding subdomain B. Serine 1126 carries the phosphoserine modification. The interval glutamate 1204–leucine 1258 is disordered. Over residues threonine 1231–serine 1245 the composition is skewed to low complexity.

It belongs to the cation transport ATPase (P-type) (TC 3.A.3) family. Type IIB subfamily. In terms of assembly, interacts with PDZD11. Interacts (via N-terminus) with YWHAE. In terms of tissue distribution, expressed predominantly in brain and skeletal muscle. Expressed in the molecular layer of the cerebellar cortex, in particular in granule cells (at protein level). Expressed in aldosterone producing glomerulosa cells of adrenal glands (at protein level). Detected at low levels in various tissues including testis, stomach, small intestine, and large intestine. Most abundant form in brain and most other tissues. As to expression, most abundant form in skeletal muscle and is also found in brain and at low levels in testis and kidney.

It is found in the cell membrane. It localises to the presynaptic cell membrane. It carries out the reaction Ca(2+)(in) + ATP + H2O = Ca(2+)(out) + ADP + phosphate + H(+). In terms of biological role, ATP-driven Ca(2+) ion pump involved in the maintenance of basal intracellular Ca(2+) levels at the presynaptic terminals. Uses ATP as an energy source to transport cytosolic Ca(2+) ions across the plasma membrane to the extracellular compartment. May counter-transport protons, but the mechanism and the stoichiometry of this Ca(2+)/H(+) exchange remains to be established. The chain is Plasma membrane calcium-transporting ATPase 3 (Atp2b3) from Rattus norvegicus (Rat).